Here is a 430-residue protein sequence, read N- to C-terminus: Delta(14)-sterol reductase (430 aa).

6 helical membrane-spanning segments follow: residues 12 to 32, 67 to 87, 109 to 129, 230 to 250, 267 to 287, and 290 to 310; these read IGTG…HFLI, LAVA…PAEI, FLVF…TWWF, FVSD…VDAL, LGVM…CLQA, and LASF…AVQF. NADP(+) contacts are provided by residues K323, R327, L350, W355, and 362–363; that span reads NY. Helical transmembrane passes span 349–369 and 376–396; these read LLIS…DWIM and TTGF…ILLL. NADP(+) is bound by residues D402, 406–410, and Y417; that span reads CREKY.

The protein belongs to the ERG4/ERG24 family.

The protein localises to the membrane. The catalysed reaction is 4,4-dimethyl-5alpha-cholesta-8,24-dien-3beta-ol + NADP(+) = 4,4-dimethyl-5alpha-cholesta-8,14,24-trien-3beta-ol + NADPH + H(+). Its pathway is steroid biosynthesis; zymosterol biosynthesis; zymosterol from lanosterol: step 2/6. Its function is as follows. Reduces the C14=C15 double bond of 4,4-dimethyl-cholesta-8,14,24-trienol to produce 4,4-dimethyl-cholesta-8,24-dienol. The protein is Delta(14)-sterol reductase (ERG3) of Ascobolus immersus.